The following is a 605-amino-acid chain: MAYIDQKHNTFWDDFAIALRDKIVFLNSTWGEIHASAHRFEDLSALAFDEAEEMIYFSDQTHQNGSIFALRRDDSTPIVVQRTGNDSVEGLAYDPLNRNLFWADMRQQKIFFSSVDTLATELPKVLVDLSGEGGQPDGIAVDICRRQLYWTNGNIKSASVERIGLDGKGRQTIISADIDMPRGIVVDQLSDRIFWVDNKVGIFFAIESARLDGSDRQVVVKGKHQDPKHLAINEDAIYWTDRMDKAVWSYPKPTYSQEVTNVTQAEPELAKPFSKEKAYGIVTRTGFYQRLQKDAHCASIVKKVKQQLNTRLNNRTHIRSAEGDRISQLEREHCLNGASFMSRGEFCICPVGFKGARCEISECHNYCVHGTCEISDAGFPKCYCQAEFYGERCEYHKCNGHCLNSGHCSMDKESDAMRCECRPNFGGERCEHNLTEQCAIYCQHPETQLPVSCLDFCEEWSNSNDTATITEYQTAGQCGPAPPVQGPLIIVIVLGLVTTSGLVALTVHGVRLIYKPKRPRIKKTFVVRKQARLNSSSDTPLTNRPLTTEQCEITIENCCNMNICETPCFDPKLVEQTFSSRDRKAPCVKEDKKILIHSMEDNLLS.

The first 31 residues, 1–31 (MAYIDQKHNTFWDDFAIALRDKIVFLNSTWG), serve as a signal peptide directing secretion. N-linked (GlcNAc...) asparagine glycosylation is found at N27, N64, and N85. Residues 32 to 486 (EIHASAHRFE…QCGPAPPVQG (455 aa)) lie on the Extracellular side of the membrane. 4 LDL-receptor class B repeats span residues 53–97 (EMIY…DPLN), 98–145 (RNLF…DICR), 146–190 (RQLY…DQLS), and 191–236 (DRIF…NEDA). N-linked (GlcNAc...) asparagine glycans are attached at residues N261 and N314. 2 EGF-like domains span residues 322 to 359 (EGDRISQLEREHCLNGASFMSRGEFCICPVGFKGARCE) and 394 to 431 (EYHKCNGHCLNSGHCSMDKESDAMRCECRPNFGGERCE). Disulfide bonds link C334–C347, C349–C358, C398–C408, C402–C419, and C421–C430. N-linked (GlcNAc...) asparagine glycosylation is found at N433 and N464. A helical membrane pass occupies residues 487–507 (PLIIVIVLGLVTTSGLVALTV). The Cytoplasmic portion of the chain corresponds to 508 to 605 (HGVRLIYKPK…IHSMEDNLLS (98 aa)).

This sequence belongs to the cueball family.

It localises to the cell membrane. Functionally, has a role in spermatogenesis and oogenesis. In Drosophila grimshawi (Hawaiian fruit fly), this protein is Protein cueball.